The primary structure comprises 464 residues: Siroheme synthase (464 aa).

Residues 1 to 203 (MEFLPLFHNL…GQGAEAERLL (203 aa)) are precorrin-2 dehydrogenase /sirohydrochlorin ferrochelatase. NAD(+)-binding positions include 22 to 23 (EI) and 43 to 44 (PE). S128 carries the phosphoserine modification. Residues 216 to 464 (GEVYLVGAGP…AWFEGAQATL (249 aa)) are uroporphyrinogen-III C-methyltransferase. P225 contacts S-adenosyl-L-methionine. Residue D248 is the Proton acceptor of the active site. K270 serves as the catalytic Proton donor. Residues 301-303 (GGD), I306, 331-332 (TA), M383, and G412 contribute to the S-adenosyl-L-methionine site.

The protein in the N-terminal section; belongs to the precorrin-2 dehydrogenase / sirohydrochlorin ferrochelatase family. This sequence in the C-terminal section; belongs to the precorrin methyltransferase family.

It catalyses the reaction uroporphyrinogen III + 2 S-adenosyl-L-methionine = precorrin-2 + 2 S-adenosyl-L-homocysteine + H(+). The catalysed reaction is precorrin-2 + NAD(+) = sirohydrochlorin + NADH + 2 H(+). The enzyme catalyses siroheme + 2 H(+) = sirohydrochlorin + Fe(2+). Its pathway is cofactor biosynthesis; adenosylcobalamin biosynthesis; precorrin-2 from uroporphyrinogen III: step 1/1. The protein operates within cofactor biosynthesis; adenosylcobalamin biosynthesis; sirohydrochlorin from precorrin-2: step 1/1. It participates in porphyrin-containing compound metabolism; siroheme biosynthesis; precorrin-2 from uroporphyrinogen III: step 1/1. It functions in the pathway porphyrin-containing compound metabolism; siroheme biosynthesis; siroheme from sirohydrochlorin: step 1/1. Its pathway is porphyrin-containing compound metabolism; siroheme biosynthesis; sirohydrochlorin from precorrin-2: step 1/1. In terms of biological role, multifunctional enzyme that catalyzes the SAM-dependent methylations of uroporphyrinogen III at position C-2 and C-7 to form precorrin-2 via precorrin-1. Then it catalyzes the NAD-dependent ring dehydrogenation of precorrin-2 to yield sirohydrochlorin. Finally, it catalyzes the ferrochelation of sirohydrochlorin to yield siroheme. The chain is Siroheme synthase from Pseudomonas syringae pv. tomato (strain ATCC BAA-871 / DC3000).